The following is a 314-amino-acid chain: Ribosomal protein uL3 glutamine methyltransferase (314 aa).

The protein belongs to the protein N5-glutamine methyltransferase family. PrmB subfamily.

It carries out the reaction L-glutaminyl-[ribosomal protein uL3] + S-adenosyl-L-methionine = N(5)-methyl-L-glutaminyl-[ribosomal protein uL3] + S-adenosyl-L-homocysteine + H(+). In terms of biological role, methylates large ribosomal subunit protein uL3 on a specific glutamine residue. The polypeptide is Ribosomal protein uL3 glutamine methyltransferase (Shewanella oneidensis (strain ATCC 700550 / JCM 31522 / CIP 106686 / LMG 19005 / NCIMB 14063 / MR-1)).